The chain runs to 581 residues: Probable peptidoglycan D,D-transpeptidase PenA (581 aa).

A helical transmembrane segment spans residues 28–48 (ISFVLMAMAVLFACLIARGLY). Serine 310 (acyl-ester intermediate) is an active-site residue.

This sequence belongs to the transpeptidase family. FtsI subfamily.

It is found in the cell inner membrane. The enzyme catalyses Preferential cleavage: (Ac)2-L-Lys-D-Ala-|-D-Ala. Also transpeptidation of peptidyl-alanyl moieties that are N-acyl substituents of D-alanine.. Its pathway is cell wall biogenesis; peptidoglycan biosynthesis. Its function is as follows. Catalyzes cross-linking of the peptidoglycan cell wall at the division septum. The chain is Probable peptidoglycan D,D-transpeptidase PenA from Neisseria gonorrhoeae.